The sequence spans 505 residues: Deoxyguanosinetriphosphate triphosphohydrolase (505 aa).

Residues R66–C273 form the HD domain.

This sequence belongs to the dGTPase family. Type 1 subfamily. In terms of assembly, homotetramer. The cofactor is Mg(2+).

It carries out the reaction dGTP + H2O = 2'-deoxyguanosine + triphosphate + H(+). Its function is as follows. dGTPase preferentially hydrolyzes dGTP over the other canonical NTPs. This chain is Deoxyguanosinetriphosphate triphosphohydrolase, found in Escherichia coli O139:H28 (strain E24377A / ETEC).